Reading from the N-terminus, the 520-residue chain is Cobalt-zinc-cadmium resistance protein CzcB (520 aa).

The helical transmembrane segment at 9 to 29 threads the bilayer; that stretch reads AAIAAIVLVGGVATGGVLLSG. Residues 28-85 form a disordered region; it reads SGRSAPEEQGGHSESKGHGDTEHHGKQAAEADHKDDKSHGDGEHHEVKKGPNGGALFS. Residues 32–76 are compositionally biased toward basic and acidic residues; sequence APEEQGGHSESKGHGDTEHHGKQAAEADHKDDKSHGDGEHHEVKK. Residues 286-320 adopt a coiled-coil conformation; that stretch reads EQKISAEQDYLSARNALQEAQISVQNAQQKLTAIG.

This sequence belongs to the membrane fusion protein (MFP) (TC 8.A.1) family.

The protein resides in the cell inner membrane. Functionally, czcA and CzcB together would act in zinc efflux nearly as effectively as the complete czc efflux system (CzcABC). The CzcB protein is thought to funnel zinc cations to the CzcA transport protein. This is Cobalt-zinc-cadmium resistance protein CzcB (czcB) from Cupriavidus metallidurans (strain ATCC 43123 / DSM 2839 / NBRC 102507 / CH34) (Ralstonia metallidurans).